The following is a 255-amino-acid chain: MSLAVRVIPCLDVDAGRVVKGVNFLDLRDAGDPVELAAAYDRAGADELTFLDVTASASDRGTMVDVVRRTAETVFIPLTVGGGIRRVGDVDTLLRAGADKVGVNTAAIVRPELIAEVADRFGRQVLVLSLDVRRAGPGTTTSGFEVTTHGGRRGTGIDAVDWARRGAELGAGEILLNSMDADGTKTGFDLDLIRAVRSVVDVPVVASGGAGAAGHFPPAIGAGADAVLAASVFHFGELTVGEVKDALRGKGHPVR.

Active-site residues include D12 and D131.

Belongs to the HisA/HisF family. In terms of assembly, heterodimer of HisH and HisF.

It localises to the cytoplasm. It carries out the reaction 5-[(5-phospho-1-deoxy-D-ribulos-1-ylimino)methylamino]-1-(5-phospho-beta-D-ribosyl)imidazole-4-carboxamide + L-glutamine = D-erythro-1-(imidazol-4-yl)glycerol 3-phosphate + 5-amino-1-(5-phospho-beta-D-ribosyl)imidazole-4-carboxamide + L-glutamate + H(+). It functions in the pathway amino-acid biosynthesis; L-histidine biosynthesis; L-histidine from 5-phospho-alpha-D-ribose 1-diphosphate: step 5/9. Functionally, IGPS catalyzes the conversion of PRFAR and glutamine to IGP, AICAR and glutamate. The HisF subunit catalyzes the cyclization activity that produces IGP and AICAR from PRFAR using the ammonia provided by the HisH subunit. This is Imidazole glycerol phosphate synthase subunit HisF from Salinispora arenicola (strain CNS-205).